The primary structure comprises 188 residues: FMN-dependent NADPH-azoreductase (188 aa).

The protein belongs to the azoreductase type 2 family. As to quaternary structure, homotetramer. It depends on FMN as a cofactor.

Catalyzes the reductive cleavage of azo bond in aromatic azo compounds to the corresponding amines. Requires NADPH, but not NADH, as an electron donor for its activity. The protein is FMN-dependent NADPH-azoreductase (azo1) of Staphylococcus saprophyticus subsp. saprophyticus (strain ATCC 15305 / DSM 20229 / NCIMB 8711 / NCTC 7292 / S-41).